Consider the following 310-residue polypeptide: Putative S-adenosyl-L-methionine-dependent methyltransferase MUL_2766 (310 aa).

Residues D131 and 160–161 (DL) contribute to the S-adenosyl-L-methionine site.

Belongs to the UPF0677 family.

Functionally, exhibits S-adenosyl-L-methionine-dependent methyltransferase activity. This Mycobacterium ulcerans (strain Agy99) protein is Putative S-adenosyl-L-methionine-dependent methyltransferase MUL_2766.